Here is a 95-residue protein sequence, read N- to C-terminus: Large ribosomal subunit protein bL25 (95 aa).

It belongs to the bacterial ribosomal protein bL25 family. As to quaternary structure, part of the 50S ribosomal subunit; part of the 5S rRNA/L5/L18/L25 subcomplex. Contacts the 5S rRNA. Binds to the 5S rRNA independently of L5 and L18.

Its function is as follows. This is one of the proteins that binds to the 5S RNA in the ribosome where it forms part of the central protuberance. The sequence is that of Large ribosomal subunit protein bL25 from Haemophilus influenzae (strain PittGG).